We begin with the raw amino-acid sequence, 265 residues long: Aquaporin-5 (265 aa).

The Cytoplasmic portion of the chain corresponds to 1–12 (MKKEVCSVAFFK). Residues 13-33 (AVFAEFLATLIFVFFGLGSAL) traverse the membrane as a helical segment. Over 34–39 (KWPSAL) the chain is Extracellular. The helical transmembrane segment at 40-60 (PTILQISIAFGLAIGTLAQAL) threads the bilayer. The Cytoplasmic segment spans residues 61 to 65 (GPVSG). The discontinuously helical intramembrane region spans 66-74 (GHINPAITL). Residues 69 to 71 (NPA) carry the NPA 1 motif. The Cytoplasmic portion of the chain corresponds to 75–87 (ALLIGNQISLLRA). The helical transmembrane segment at 88–108 (IFYVAAQLVGAIAGAGILYWL) threads the bilayer. At 109-126 (APGNARGNLAVNALSNNT) the chain is on the extracellular side. Asn-124 carries an N-linked (GlcNAc...) asparagine glycan. A helical transmembrane segment spans residues 127–147 (TPGKAVVVELILTFQLALCIF). The Cytoplasmic segment spans residues 148–158 (SSTDSRRTSPV). The helical transmembrane segment at 159 to 179 (GSPALSIGLSVTLGHLVGIYF) threads the bilayer. A topological domain (extracellular) is located at residue Thr-180. An intramembrane region (discontinuously helical) is located at residues 181–191 (GCSMNPARSFG). Positions 185 to 187 (NPA) match the NPA 2 motif. Residues 192 to 203 (PAVVMNRFSPSH) lie on the Extracellular side of the membrane. The chain crosses the membrane as a helical span at residues 204–224 (WVFWVGPIVGAVLAAILYFYL). Topologically, residues 225–265 (LFPSSLSLHDRVAVVKGTYEPEEDWEDHREERKKTIELTAH) are cytoplasmic.

The protein belongs to the MIP/aquaporin (TC 1.A.8) family. As to quaternary structure, homotetramer; each monomer provides an independent water pore. Interacts with TRPV4; the interaction is probably indirect and regulates TRPV4 activation by hypotonicity. Detected at the luminal membrane of secretory epithelial cells in hindpaw sweat glands. Detected in acinar cells in salivary glands, in duct cells in lacrimal glands and in lung (at protein level). Detected in lung, parotid, submandibular, sublingual, and lacrimal gland tissues.

The protein localises to the apical cell membrane. The protein resides in the cell membrane. Its subcellular location is the cytoplasmic vesicle membrane. It catalyses the reaction H2O(in) = H2O(out). In terms of biological role, aquaporins form homotetrameric transmembrane channels, with each monomer independently mediating water transport across the plasma membrane along its osmotic gradient. Plays an important role in fluid secretion in salivary glands. Required for TRPV4 activation by hypotonicity. Together with TRPV4, controls regulatory volume decrease in salivary epithelial cells. Seems to play a redundant role in water transport in the eye, lung and in sweat glands. The sequence is that of Aquaporin-5 from Mus musculus (Mouse).